The sequence spans 191 residues: Apoptosis regulator BHRF1 (191 aa).

The segment at 1–18 is interaction with host VRK2; that stretch reads MAYSTREILLALCIRDSR. Asparagine 22 carries an N-linked (GlcNAc...) asparagine; by host glycan. Residues 89–109 carry the BH1 motif; the sequence is EIFHRGDPSLGRALAWMAWCM. Positions 89 to 142 are interaction with host VRK2; it reads EIFHRGDPSLGRALAWMAWCMHACRTLCCNQSTPYYVVDLSVRGMLEASEGLDG. Residue asparagine 118 is glycosylated (N-linked (GlcNAc...) asparagine; by host). A BH2 motif is present at residues 142-157; the sequence is GWIHQQGGWSTLIEDN. The helical transmembrane segment at 166–186 threads the bilayer; that stretch reads WTLFLAGLTLSLLVICSYLFI.

It belongs to the Bcl-2 family. In terms of assembly, interacts with isoform 1 of host VRK2; this interaction is involved in protecting cells from apoptosis. Interacts with host PRA1; this interaction seems to modulate BHRF1 anti-apoptotic activity. Interacts with host BCL2L11. Interacts with host BAD and BBC3. Interacts with BALF1; BALF1 acting as a negative regulator of the survival function of BHRF1. Interacts with host BECN1.

The protein localises to the host membrane. It localises to the host mitochondrion. Functionally, prevents premature death of the host cell during virus production, which would otherwise reduce the amount of progeny virus. Acts as a host B-cell leukemia/lymphoma 2 (Bcl-2) homolog, and interacts with pro-apoptotic proteins to prevent mitochondria permeabilization, release of cytochrome c and subsequent apoptosis of the host cell. In addition, plays a role in the inhibiton of host BECN1-mediated starvation-induced autophagy without affecting basal levels of autophagy. This chain is Apoptosis regulator BHRF1, found in Epstein-Barr virus (strain GD1) (HHV-4).